The chain runs to 62 residues: Guanine nucleotide-binding protein subunit gamma (62 aa).

Positions 40–62 (DMLVSGPTDQHNPFQEKKSCSVL) are disordered. A compositionally biased stretch (basic and acidic residues) spans 53-62 (FQEKKSCSVL). Cysteine methyl ester is present on cysteine 59. Residue cysteine 59 is the site of S-geranylgeranyl cysteine attachment. Positions 60–62 (SVL) are cleaved as a propeptide — removed in mature form.

This sequence belongs to the G protein gamma family. In terms of assembly, g proteins are composed of 3 units, alpha, beta and gamma. Interacts with gpb-1 and gpb-2. In terms of tissue distribution, predominantly expressed in the central nervous system.

The protein resides in the cell membrane. In terms of biological role, guanine nucleotide-binding proteins (G proteins) are involved as a modulator or transducer in various transmembrane signaling systems. The beta and gamma chains are required for the GTPase activity, for replacement of GDP by GTP, and for G protein-effector interaction. The chain is Guanine nucleotide-binding protein subunit gamma (gpc-1) from Caenorhabditis elegans.